The chain runs to 241 residues: 1-(5-phosphoribosyl)-5-[(5-phosphoribosylamino)methylideneamino] imidazole-4-carboxamide isomerase (241 aa).

Asp-8 acts as the Proton acceptor in catalysis. The Proton donor role is filled by Asp-129.

The protein belongs to the HisA/HisF family.

It localises to the cytoplasm. The enzyme catalyses 1-(5-phospho-beta-D-ribosyl)-5-[(5-phospho-beta-D-ribosylamino)methylideneamino]imidazole-4-carboxamide = 5-[(5-phospho-1-deoxy-D-ribulos-1-ylimino)methylamino]-1-(5-phospho-beta-D-ribosyl)imidazole-4-carboxamide. Its pathway is amino-acid biosynthesis; L-histidine biosynthesis; L-histidine from 5-phospho-alpha-D-ribose 1-diphosphate: step 4/9. The polypeptide is 1-(5-phosphoribosyl)-5-[(5-phosphoribosylamino)methylideneamino] imidazole-4-carboxamide isomerase (Chloroflexus aggregans (strain MD-66 / DSM 9485)).